The chain runs to 112 residues: Cell cycle protein GpsB (112 aa).

A coiled-coil region spans residues 38–72; sequence IKDYEAFHKEFEQLKQQNARLKRELEEQKLAATQV.

Belongs to the GpsB family. Forms polymers through the coiled coil domains. Interacts with PBP1, MreC and EzrA.

It localises to the cytoplasm. Divisome component that associates with the complex late in its assembly, after the Z-ring is formed, and is dependent on DivIC and PBP2B for its recruitment to the divisome. Together with EzrA, is a key component of the system that regulates PBP1 localization during cell cycle progression. Its main role could be the removal of PBP1 from the cell pole after pole maturation is completed. Also contributes to the recruitment of PBP1 to the division complex. Not essential for septum formation. This Bacillus anthracis (strain A0248) protein is Cell cycle protein GpsB.